A 369-amino-acid chain; its full sequence is UPF0324 membrane protein DVU_0543 (369 aa).

9 helical membrane-spanning segments follow: residues 13–31 (IVPG…RTYV), 46–65 (WLVQ…TGMF), 110–132 (GGVA…MWLG), 142–164 (TATM…APGV), 171–193 (LALS…PFIG), 240–262 (WNVV…YWKG), 269–291 (TSLG…GMTA), 306–328 (LHLM…GAYI), and 341–363 (LRIG…LAFI).

The protein belongs to the UPF0324 family.

Its subcellular location is the cell membrane. In Nitratidesulfovibrio vulgaris (strain ATCC 29579 / DSM 644 / CCUG 34227 / NCIMB 8303 / VKM B-1760 / Hildenborough) (Desulfovibrio vulgaris), this protein is UPF0324 membrane protein DVU_0543.